The primary structure comprises 146 residues: Cytochrome c-type biogenesis protein CcmE (146 aa).

Topologically, residues M1–R7 are cytoplasmic. A helical; Signal-anchor for type II membrane protein membrane pass occupies residues L8–A28. At F29–K146 the chain is on the periplasmic side. Heme contacts are provided by H123 and Y127.

Belongs to the CcmE/CycJ family.

Its subcellular location is the cell inner membrane. Functionally, heme chaperone required for the biogenesis of c-type cytochromes. Transiently binds heme delivered by CcmC and transfers the heme to apo-cytochromes in a process facilitated by CcmF and CcmH. The protein is Cytochrome c-type biogenesis protein CcmE of Zymomonas mobilis subsp. mobilis (strain ATCC 31821 / ZM4 / CP4).